A 339-amino-acid chain; its full sequence is MKKFINQFSASLKNNILVFLAFPFVWTSCARDNPLSSENSNISPNAAARAAVTGTTKANIKLFSFTEVNDTNPLNNLNFTLKNSGKPLVDMVVLFSANINYDAANDKVFVSNNPNVQHLLTNRAKYLKPLQDKGIKVILSILGNHDRSGIANLSTARAKAFAQELKNTCDLYNLDGVFFDDEYSAYQTPPPSGFVTPSNNAAARLAYETKQAMPNKLVTVYVYSRTSSFPTAVDGVNAGSYVDYAIHDYGGSYDLATNYPGLAKSGMVMSSQEFNQGRYATAQALRNIVTKGYGGHMIFAMDPNRSNFTSGQLPALKLIAKELYGDELVYSNTPYSKDW.

Positions 1–50 (MKKFINQFSASLKNNILVFLAFPFVWTSCARDNPLSSENSNISPNAAARA) form a signal peptide, or 51, or 52. The region spanning 60 to 326 (IKLFSFTEVN…KLIAKELYGD (267 aa)) is the GH18 domain. The Proton donor role is filled by Glu-182. Residue Trp-339 is a propeptide, removed in mature form.

It belongs to the glycosyl hydrolase 18 family. As to quaternary structure, monomer.

It localises to the secreted. It carries out the reaction an N(4)-(oligosaccharide-(1-&gt;3)-[oligosaccharide-(1-&gt;6)]-beta-D-Man-(1-&gt;4)-beta-D-GlcNAc-(1-&gt;4)-alpha-D-GlcNAc)-L-asparaginyl-[protein] + H2O = an oligosaccharide-(1-&gt;3)-[oligosaccharide-(1-&gt;6)]-beta-D-Man-(1-&gt;4)-D-GlcNAc + N(4)-(N-acetyl-beta-D-glucosaminyl)-L-asparaginyl-[protein]. Functionally, endohydrolysis of the di-N-acetylchitobiosyl unit in high-mannose glycopeptides and glycoproteins. Does not hydrolyze complex bi- or triantennary glycans. The presence of a core-bound fucose impedes endo F1 hydrolysis. The polypeptide is Endo-beta-N-acetylglucosaminidase F1 (endOF1) (Elizabethkingia meningoseptica (Chryseobacterium meningosepticum)).